Reading from the N-terminus, the 688-residue chain is MIIRFKINEIECEVNEEKEDITILQACTANGIEIPRFCYHEKLTIAGNCRMCLVYVTNEEKLLAACGIPLDENFDDESIETEIDEILKAREGVMEFLLINHPLDCPICDQGGECDLQEQTLAYGLDTGRFYIKKRAVEIKTFGRLIKGIMTRCIHCTRCVRFLTEIAGVNELGVLGRGYNMEIGTYKKNVMIESELSGNIIDLCPVGALTSAVYAYKGRPWELKNIKGIDIFDTLLTPINYQVKGGEIFRILPRINDRINEEWITDKVRFHYESYKIIEKIRKETPSYKIQANKFIELTWKTALKMVFKVLLNKKNKVDLIIGSKINSTNLRIYKELMNRLGSKNYITENGLMFKKFNYDLRENYINSNDLYNVDKNDLVLLCGINLRVESPLLNIKLRNVNFGDDEIESVKKIGIIGNKFDWKHESEYIGATLNSMLKLFEGRLPYCQQIKKSKAPLIIVGPSLLTRISLTLQEMRAIFMKACNLKPENILIITQGANFGMALEEGLFKEKFSIGGNVLYSIDSNEVQVTNKINYVIYQGIINDKFENKIDLYLPSKHYFEDFEGDREVYMNTFGQRSEIEKLSISKGNKIKENSMIGYIQLMYLNNKEMTRKEKEQKDIKLSYREMKKEEKRKIKVNKYLTINNIIENYYMTDINIRLSKNLMITGQLRKEKKIMEAGIWKNRKCI.

The 2Fe-2S ferredoxin-type domain maps to methionine 1–glutamate 85. [2Fe-2S] cluster-binding residues include cysteine 38, cysteine 49, cysteine 52, and cysteine 66. A 4Fe-4S His(Cys)3-ligated-type domain is found at glutamate 85–glycine 124. 8 residues coordinate [4Fe-4S] cluster: histidine 101, cysteine 105, cysteine 108, cysteine 114, cysteine 153, cysteine 156, cysteine 159, and cysteine 204. Residues leucine 223–glutamate 279 enclose the 4Fe-4S Mo/W bis-MGD-type domain.

Belongs to the complex I 75 kDa subunit family. In terms of assembly, complex I is composed of about 45 different subunits. Requires [2Fe-2S] cluster as cofactor. The cofactor is [4Fe-4S] cluster.

Its subcellular location is the mitochondrion inner membrane. It carries out the reaction a ubiquinone + NADH + 5 H(+)(in) = a ubiquinol + NAD(+) + 4 H(+)(out). In terms of biological role, core subunit of the mitochondrial membrane respiratory chain NADH dehydrogenase (Complex I) that is believed to belong to the minimal assembly required for catalysis. Complex I functions in the transfer of electrons from NADH to the respiratory chain. The immediate electron acceptor for the enzyme is believed to be ubiquinone. This is the largest subunit of complex I and it is a component of the iron-sulfur (IP) fragment of the enzyme. It may form part of the active site crevice where NADH is oxidized. In Dictyostelium discoideum (Social amoeba), this protein is NADH-ubiquinone oxidoreductase 75 kDa subunit (nad11).